The sequence spans 343 residues: Trans-enoyl reductase ACTTS2 (343 aa).

Position 42-45 (42-45 (GDWK)) interacts with NADP(+). Residue 128 to 135 (VGITTVGQ) participates in substrate binding. Residues 162-165 (STAT), 185-188 (SPHN), and tyrosine 203 contribute to the NADP(+) site. Position 268-272 (268-272 (GYTAL)) interacts with substrate. NADP(+) is bound at residue 333-334 (VS).

It belongs to the zinc-containing alcohol dehydrogenase family. As to quaternary structure, monomer.

Its pathway is mycotoxin biosynthesis. Trans-enoyl reductase; part of the gene clusters that mediate the biosynthesis of the host-selective toxins (HSTs) ACT-toxins responsible for brown spot of tangerine disease by the tangerine pathotype which affects tangerines and mandarins. ACT-toxins consist of three moieties, 9,10-epoxy-8-hydroxy-9-methyl-decatrienoic acid (EDA), valine and a polyketide. ACT-toxin I is toxic to both citrus and pear; toxin II the 5''-deoxy derivative of ACT-toxin I, is highly toxic to pear and slightly toxic to citrus. On cellular level, ACT-toxins affect plasma membrane of susceptible cells and cause a sudden increase in loss of K(+) after a few minutes of toxin treatment. The acyl-CoA ligase ACTT1, the hydrolase ACTT2, the enoyl-CoA hydratases ACTT3 and ACTT6, and the acyl-CoA synthetase ACTT5 are all involved in the biosynthesis of the AK-, AF- and ACT-toxin common 9,10-epoxy-8-hydroxy-9-methyl-decatrienoic acid (EDA) structural moiety. The exact role of each enzyme, and of additional enzymes identified within the AF-toxin clusters have still to be determined. On the other hand, ACTTS1 to ACTTS4 are specific to the tangerine pathotype. The function of ACTTS3 is to elongate the polyketide chain portion of ACT-toxin that is unique to this toxin. The enoyl-reductase ACTTS2 might complement the missing enoyl-reductase (ER) domain in ACTTS3 in the synthesis of the polyketide portion of ACT-toxin. The roles of the nonribosomal peptide synthetases-related proteins ACTTS1 and ACTTS4 have also still not been elucidated. The protein is Trans-enoyl reductase ACTTS2 of Alternaria alternata (Alternaria rot fungus).